Consider the following 352-residue polypeptide: Membrane progestin receptor alpha (352 aa).

Residues 1–75 lie on the Cytoplasmic side of the membrane; that stretch reads MATVVMEQIG…FLTLFQRHNE (75 aa). A helical transmembrane segment spans residues 76–96; it reads TLNVWTHLLAAFIILVKWQEI. Over 97–110 the chain is Extracellular; the sequence is SETVDFLRDPHAQP. Residues 111–131 form a helical membrane-spanning segment; sequence LFIVLLAAFTYLSFSALAHLL. At 132 to 139 the chain is on the cytoplasmic side; that stretch reads SAKSELSY. Residues 140–160 form a helical membrane-spanning segment; it reads YTFYFLDYVGVAVYQYGSALA. The Extracellular portion of the chain corresponds to 161–175; sequence HYYYAIEKEWHTKVQ. The chain crosses the membrane as a helical span at residues 176-196; it reads GLFLPAAAFLAWLTCFGCCYG. Residues 197–242 are Cytoplasmic-facing; sequence KYASPELPKVANKLFQVVPSALAYCLDISPVVHRIYSCYQEGCSDP. Residues 243–263 traverse the membrane as a helical segment; it reads VVAYHFYHVVFFLIGAYFFCC. At 264–275 the chain is on the extracellular side; that stretch reads PHPESLFPGKCD. Residues 276–296 form a helical membrane-spanning segment; it reads FIGQGHQLFHVFVVVCTLTQV. Topologically, residues 297–316 are cytoplasmic; it reads EALRTDFTERRPFYERLHGD. The helical transmembrane segment at 317-337 threads the bilayer; the sequence is LAHDAVALFIFTACCSALTAF. Over 338 to 352 the chain is Extracellular; the sequence is YVRQRVRASLHEKGE.

It belongs to the ADIPOR family. As to expression, strongly expressed in ovary and brain; lower expression in testis and pituitary. Not detected in heart, kidney, spleen, intestine, gill and muscle.

The protein localises to the cell membrane. In terms of biological role, steroid membrane receptor. Binds progesterone, progestin and 17-hydroxyprogesterone in vitro. Capable of mediating progestin-induced oocyte maturation. The chain is Membrane progestin receptor alpha (mpra) from Cynoscion nebulosus (Spotted seatrout).